A 299-amino-acid chain; its full sequence is Protease HtpX homolog (299 aa).

2 helical membrane passes run 19–39 (LFIVLFSLILFAVGYFFVWYF) and 41–61 (WGITGIIFLAIFIVLYNWIAY). Residue H146 coordinates Zn(2+). Residue E147 is part of the active site. H150 provides a ligand contact to Zn(2+). Helical transmembrane passes span 156–176 (ILLMTVVAIVAGLIILLRDVF) and 198–218 (IILLLIGLILSIIAPIVVLII). E227 serves as a coordination point for Zn(2+).

The protein belongs to the peptidase M48B family. The cofactor is Zn(2+).

Its subcellular location is the cell membrane. The polypeptide is Protease HtpX homolog (Caldanaerobacter subterraneus subsp. tengcongensis (strain DSM 15242 / JCM 11007 / NBRC 100824 / MB4) (Thermoanaerobacter tengcongensis)).